The primary structure comprises 299 residues: UTP--glucose-1-phosphate uridylyltransferase 1 (299 aa).

The protein belongs to the UDPGP type 2 family.

The catalysed reaction is alpha-D-glucose 1-phosphate + UTP + H(+) = UDP-alpha-D-glucose + diphosphate. Its pathway is carbohydrate metabolism; nucleotide-sugar metabolism. The chain is UTP--glucose-1-phosphate uridylyltransferase 1 (hasC1) from Streptococcus pyogenes serotype M6 (strain ATCC BAA-946 / MGAS10394).